The sequence spans 345 residues: Viral Fc-gamma receptor-like protein UL119 (345 aa).

The N-terminal stretch at 1–23 (MCSVLAIALVVALLGDMHPGVKS) is a signal peptide. The interval 23–42 (SSTTSAVTSPSNTTVTSTTS) is disordered. Over 24-294 (STTSAVTSPS…KSDPLFEDRL (271 aa)) the chain is Virion surface. N-linked (GlcNAc...) asparagine; by host glycosylation is found at Asn-34, Asn-48, Asn-95, Asn-104, Asn-148, Asn-179, Asn-198, Asn-217, Asn-225, Asn-241, Asn-244, and Asn-260. Positions 91–190 (QVSLNATCKV…TWDLFTYPIY (100 aa)) constitute an Ig-like V-type domain. A helical membrane pass occupies residues 295–317 (LAYGVLAFLVFMVIILLYVTYML). Over 318–345 (ARRRDWSYKRLEEPVEEKKHPVPYFKQW) the chain is Intravirion.

Its subcellular location is the virion membrane. Functionally, serves as a receptor for the Fc part of human IgG. May thus be involved in interfering with host Ig-mediated immune responses. This chain is Viral Fc-gamma receptor-like protein UL119 (UL119/UL118), found in Human cytomegalovirus (strain AD169) (HHV-5).